Consider the following 1066-residue polypeptide: MEGLLHYINPAHAISLLSALNEERLKGQLCDVLLIVGDQKFRAHKNVLAASSEYFQSLFTNKENESQTVFQLDFCEPDAFDNVLNYIYSSSLFVEKSSLAAVQELGYSLGISFLTNIVSKTPQAPFPTCPNRKKVFVEDDENSSQKRSVIVCQSRNEAQGKTVSQNQPDVSHTSRPSPSIAVKANTNKPHVPKPIEPLHNLSLTEKSWPKDSSVVYAKSLEHSGSLDDPNRISLVKRNAVLPSKPLQDREAMDDKPGVSGQLPKGKALELALKRPRPPVLSVCSSSETPYLLKETNKGNGQGEDRNLLYYSKLGLVIPSSGSGSGNQSIDRSGPLVKSLLRRSLSMDSQVPVYSPSIDLKSSQGSSSVSSDAPGNVLCALSQKSSLKDCSEKTALDDRPQVLQPHRLRSFSASQSTDREGASPVTEVRIKTEPSSPLSDPSDIIRVTVGDAATTAAASSSSVTRDLSLKTEDDQKDMSRLPAKRRFQADRRLPFKKLKVNEHGSPVSEDNFEEGSSPTLLDADFPDSDLNKDEFGELEGTRPNKKFKCKHCLKIFRSTAGLHRHVNMYHNPEKPYACDICHKRFHTNFKVWTHCQTQHGIVKNPSPASSSHAVLDEKFQRKLIDIVREREIKKALIIKLRRGKPGFQGQSSSQAQQVIKRNLRSRAKGAYICTYCGKAYRFLSQFKQHIKMHPGEKPLGVNKVAKPKEHAPLASPVENKEVYQCRLCNAKLSSLLEQGSHERLCRNAAVCPYCSLRFFSPELKQEHESKCEYKKLTCLECMRTFKSSFSIWRHQVEVHNQNNMAPTENFSLPVLDHNGDVTGSSRPQSQPEPNKVNHIVTTKDDNVFSDSSEQVNFDSEDSSCLPEDLSLSKQLKIQVKEEPVEEAEEEAPEASTAPKEAGPSKEASLWPCEKCGKMFTVHKQLERHQELLCSVKPFICHVCNKAFRTNFRLWSHFQSHMSQASEESAHKESEVCPVPTNSPSPPPLPPPPPLPKIQPLEPDSPTGLSENPTPATEKLFVPQESDTLFYHAPPLSAITFKRQFMCKLCHRTFKTAFSLWSHEQTHN.

Residues 30–96 (CDVLLIVGDQ…IYSSSLFVEK (67 aa)) form the BTB domain. Residues 30 to 96 (CDVLLIVGDQ…IYSSSLFVEK (67 aa)) form a mediates homodimerization region. Lys-40 participates in a covalent cross-link: Glycyl lysine isopeptide (Lys-Gly) (interchain with G-Cter in SUMO1); alternate. Residue Lys-40 forms a Glycyl lysine isopeptide (Lys-Gly) (interchain with G-Cter in SUMO2); alternate linkage. A compositionally biased stretch (polar residues) spans 154–177 (SRNEAQGKTVSQNQPDVSHTSRPS). The interval 154-196 (SRNEAQGKTVSQNQPDVSHTSRPSPSIAVKANTNKPHVPKPIE) is disordered. Residues Lys-255, Lys-266, Lys-273, Lys-312, and Lys-337 each participate in a glycyl lysine isopeptide (Lys-Gly) (interchain with G-Cter in SUMO2) cross-link. 2 positions are modified to phosphoserine: Ser-345 and Ser-381. Lys-383 is covalently cross-linked (Glycyl lysine isopeptide (Lys-Gly) (interchain with G-Cter in SUMO2)). Positions 388–399 (DCSEKTALDDRP) are enriched in basic and acidic residues. Disordered regions lie at residues 388–442 (DCSE…DPSD), 454–485 (TAAASSSSVTRDLSLKTEDDQKDMSRLPAKRR), and 498–525 (KVNEHGSPVSEDNFEEGSSPTLLDADFP). 2 positions are modified to phosphoserine: Ser-411 and Ser-422. Lys-430 participates in a covalent cross-link: Glycyl lysine isopeptide (Lys-Gly) (interchain with G-Cter in SUMO2). A Phosphothreonine modification is found at Thr-431. A phosphoserine mark is found at Ser-434, Ser-435, and Ser-438. Positions 466-478 (LSLKTEDDQKDMS) are enriched in basic and acidic residues. Residues Lys-469 and Lys-475 each participate in a glycyl lysine isopeptide (Lys-Gly) (interchain with G-Cter in SUMO2) cross-link. C2H2-type zinc fingers lie at residues 546–569 (FKCKHCLKIFRSTAGLHRHVNMYH) and 575–598 (YACDICHKRFHTNFKVWTHCQTQH). Ser-605 is modified (phosphoserine). Glycyl lysine isopeptide (Lys-Gly) (interchain with G-Cter in SUMO2) cross-links involve residues Lys-617, Lys-643, and Lys-659. The segment at 670-692 (YICTYCGKAYRFLSQFKQHIKMH) adopts a C2H2-type 3 zinc-finger fold. A Glycyl lysine isopeptide (Lys-Gly) (interchain with G-Cter in SUMO2) cross-link involves residue Lys-702. At Ser-714 the chain carries Phosphoserine. The C2H2-type 4; atypical zinc finger occupies 748-770 (AVCPYCSLRFFSPELKQEHESKC). Residues Lys-763 and Lys-785 each participate in a glycyl lysine isopeptide (Lys-Gly) (interchain with G-Cter in SUMO2) cross-link. The C2H2-type 5 zinc-finger motif lies at 775 to 798 (LTCLECMRTFKSSFSIWRHQVEVH). A disordered region spans residues 806 to 840 (TENFSLPVLDHNGDVTGSSRPQSQPEPNKVNHIVT). Residues 820–831 (VTGSSRPQSQPE) are compositionally biased toward polar residues. Lys-875 participates in a covalent cross-link: Glycyl lysine isopeptide (Lys-Gly) (interchain with G-Cter in SUMO2). Residue Lys-879 forms a Glycyl lysine isopeptide (Lys-Gly) (interchain with G-Cter in SUMO1); alternate linkage. Lys-879 is covalently cross-linked (Glycyl lysine isopeptide (Lys-Gly) (interchain with G-Cter in SUMO2); alternate). The disordered stretch occupies residues 879–906 (KEEPVEEAEEEAPEASTAPKEAGPSKEA). Residues 882 to 891 (PVEEAEEEAP) show a composition bias toward acidic residues. The C2H2-type 6; atypical zinc finger occupies 909–932 (WPCEKCGKMFTVHKQLERHQELLC). Residue Lys-935 forms a Glycyl lysine isopeptide (Lys-Gly) (interchain with G-Cter in SUMO2) linkage. The C2H2-type 7 zinc-finger motif lies at 937–959 (FICHVCNKAFRTNFRLWSHFQSH). Positions 963-1014 (ASEESAHKESEVCPVPTNSPSPPPLPPPPPLPKIQPLEPDSPTGLSENPTPA) are disordered. The segment covering 979 to 995 (TNSPSPPPLPPPPPLPK) has biased composition (pro residues). The residue at position 1003 (Ser-1003) is a Phosphoserine. The segment at 1043–1065 (FMCKLCHRTFKTAFSLWSHEQTH) adopts a C2H2-type 8 zinc-finger fold.

As to quaternary structure, homodimer. Interacts with ZBTB14. In terms of tissue distribution, ubiquitous in fetal and adult tissues.

It localises to the nucleus. Acts as a transcription repressor. The protein is Zinc finger and BTB domain-containing protein 21 (ZBTB21) of Homo sapiens (Human).